The following is a 424-amino-acid chain: Ornithine aminotransferase (424 aa).

Position 272 is an N6-(pyridoxal phosphate)lysine (K272). K390 is covalently cross-linked (Glycyl lysine isopeptide (Lys-Gly) (interchain with G-Cter in ubiquitin)).

Belongs to the class-III pyridoxal-phosphate-dependent aminotransferase family. Pyridoxal 5'-phosphate is required as a cofactor.

The protein localises to the cytoplasm. It catalyses the reaction a 2-oxocarboxylate + L-ornithine = L-glutamate 5-semialdehyde + an L-alpha-amino acid. Its pathway is amino-acid biosynthesis; L-proline biosynthesis; L-glutamate 5-semialdehyde from L-ornithine: step 1/1. By arginine and urea. In terms of biological role, catalyzes the transamination of ornithine into L-glutamate gamma-semialdehyde, the second step of arginine degradation. The polypeptide is Ornithine aminotransferase (CAR2) (Saccharomyces cerevisiae (strain ATCC 204508 / S288c) (Baker's yeast)).